Consider the following 365-residue polypeptide: Putrescine carbamoyltransferase (365 aa).

Residues 54–58, Arg105, and His132 contribute to the carbamoyl phosphate site; that span reads STRTR. 277 to 280 serves as a coordination point for putrescine; the sequence is HCLP.

It belongs to the aspartate/ornithine carbamoyltransferase superfamily. PTCase family. Homotrimer.

The protein localises to the cytoplasm. The catalysed reaction is carbamoyl phosphate + putrescine = N-carbamoylputrescine + phosphate + H(+). The protein operates within amine and polyamine biosynthesis; putrescine biosynthesis via agmatine pathway; putrescine from N-carbamoylputrescine (transferase route): step 1/1. Its function is as follows. Catalyzes the phosphorolysis of N-carbamoylputrescine to form carbamoyl phosphate and putrescine. Is involved in the degradation pathway of the polyamine agmatine. The chain is Putrescine carbamoyltransferase from Mycoplasma capricolum subsp. capricolum (strain California kid / ATCC 27343 / NCTC 10154).